A 245-amino-acid chain; its full sequence is Uridylate kinase (245 aa).

Residue 20-23 (KVSG) coordinates ATP. Glycine 62 is a UMP binding site. Glycine 63 and arginine 67 together coordinate ATP. UMP is bound by residues aspartate 81 and 142-149 (IGSPFFTT). Residues threonine 169, glutamine 170, tyrosine 175, and aspartate 178 each contribute to the ATP site.

The protein belongs to the UMP kinase family. As to quaternary structure, homohexamer.

The protein localises to the cytoplasm. The catalysed reaction is UMP + ATP = UDP + ADP. It functions in the pathway pyrimidine metabolism; CTP biosynthesis via de novo pathway; UDP from UMP (UMPK route): step 1/1. With respect to regulation, inhibited by UTP. Its function is as follows. Catalyzes the reversible phosphorylation of UMP to UDP. This is Uridylate kinase from Anaplasma marginale (strain St. Maries).